The primary structure comprises 216 residues: Somatotropin (216 aa).

The N-terminal stretch at 1-26 (MAAGPRTSVLLAFGLLCLPWPQDVGA) is a signal peptide. Position 45 (H45) interacts with Zn(2+). An intrachain disulfide couples C78 to C189. A Phosphoserine modification is found at S131. Zn(2+) is bound at residue E198. An intrachain disulfide couples C206 to C214.

Belongs to the somatotropin/prolactin family.

The protein localises to the secreted. Its function is as follows. Plays an important role in growth control. Its major role in stimulating body growth is to stimulate the liver and other tissues to secrete IGF1. It stimulates both the differentiation and proliferation of myoblasts. It also stimulates amino acid uptake and protein synthesis in muscle and other tissues. This is Somatotropin (GH1) from Equus caballus (Horse).